The primary structure comprises 305 residues: RNA-binding protein with serine-rich domain 1 (305 aa).

Residues 1 to 10 (MDLSGVKKKS) show a composition bias toward basic residues. Positions 1–161 (MDLSGVKKKS…KRRSPSPKPT (161 aa)) are necessary for interaction with SRP54, nuclear localization and exon-skipping. Residues 1–170 (MDLSGVKKKS…TKVHIGRLTR (170 aa)) form a disordered region. The segment at 1–220 (MDLSGVKKKS…ENPDEAEKAL (220 aa)) is necessary for interaction with the cleaved p110 isoform of CDC2L1. Residues K7 and K15 each participate in a glycyl lysine isopeptide (Lys-Gly) (interchain with G-Cter in SUMO2) cross-link. Over residues 33 to 59 (DRSDEKSKDRSKDKGATKESSEKDRGR) the composition is skewed to basic and acidic residues. S53 carries the post-translational modification Phosphoserine; by CK2. A compositionally biased stretch (low complexity) spans 68–126 (ASSGSSSTRSRSSSTSSSGSSTSTGSSSGSSSSSASSRSGSSSTSRSSSSSSSSGSPSP). The interval 69–121 (SSGSSSTRSRSSSTSSSGSSTSTGSSSGSSSSSASSRSGSSSTSRSSSSSSSS) is necessary for interactions with UPF2 and UPF3B and UPF2-dependent NMD. 2 stretches are compositionally biased toward basic residues: residues 127 to 143 (SRRR…KSKP) and 151 to 167 (RKRR…HIGR). A phosphoserine mark is found at S155 and S157. Residues 156–242 (PSPKPTKVHI…ITATAVLAPW (87 aa)) are necessary for interaction with PNN and exon-skipping. The interaction with SAP18 and ACIN1 stretch occupies residues 159–244 (KPTKVHIGRL…ATAVLAPWPR (86 aa)). Position 161 is a phosphothreonine (T161). One can recognise an RRM domain in the interval 161-240 (TKVHIGRLTR…QEITATAVLA (80 aa)). K218 carries the N6-acetyllysine modification. Positions 238-305 (VLAPWPRPPP…RSRSSSNSSR (68 aa)) are necessary for interaction with TRA2B, nuclear localization and exon-skipping. A disordered region spans residues 240–305 (APWPRPPPRR…RSRSSSNSSR (66 aa)). Residues 242–262 (WPRPPPRRFSPPRRMLPPPPM) are compositionally biased toward pro residues. The segment covering 266–298 (SPPRMRRRSRSPRRRSPVRRRSRSPGRRRHRSR) has biased composition (basic residues).

Belongs to the splicing factor SR family. In terms of assembly, found in mRNA splicing-dependent exon junction complexes (EJC). Found in a post-splicing complex with NXF1, RBM8A, UPF1, UPF2, UPF3A, UPF3B and RNPS1. Component of the heterotrimeric ASAP (apoptosis- and splicing-associated protein) and PSAP complexes consisting of RNPS1, SAP18 and either ACIN1 or PNN, respectively; the ASAP and PSAP complexes probably are formed mutually exclusive. Component of the active spliceosome. Associates with polysomes. Interacts with the cleaved p110 isoform of CDC2L1, CSNK2A1, PNN, SART3, SRP54, SRRM1 and TRA2B/SFRS10. Phosphorylated on one or more of the four Ser/Thr residues (Ser-43, Thr-49, Ser-52 or Ser-53). Ser-53 phosphorylation site is important for splicing and translation stimulation activity in vitro. Ubiquitous.

The protein resides in the nucleus. Its subcellular location is the nucleus speckle. The protein localises to the cytoplasm. Functionally, part of pre- and post-splicing multiprotein mRNP complexes. Auxiliary component of the splicing-dependent multiprotein exon junction complex (EJC) deposited at splice junction on mRNAs. The EJC is a dynamic structure consisting of core proteins and several peripheral nuclear and cytoplasmic associated factors that join the complex only transiently either during EJC assembly or during subsequent mRNA metabolism. Component of the ASAP and PSAP complexes which bind RNA in a sequence-independent manner and are proposed to be recruited to the EJC prior to or during the splicing process and to regulate specific excision of introns in specific transcription subsets. The ASAP complex can inhibit RNA processing during in vitro splicing reactions. The ASAP complex promotes apoptosis and is disassembled after induction of apoptosis. Enhances the formation of the ATP-dependent A complex of the spliceosome. Involved in both constitutive splicing and, in association with SRP54 and TRA2B/SFRS10, in distinctive modulation of alternative splicing in a substrate-dependent manner. Involved in the splicing modulation of BCL2L1/Bcl-X (and probably other apoptotic genes); specifically inhibits formation of proapoptotic isoforms such as Bcl-X(S); the activity is different from the established EJC assembly and function. Participates in mRNA 3'-end cleavage. Involved in UPF2-dependent nonsense-mediated decay (NMD) of mRNAs containing premature stop codons. Also mediates increase of mRNA abundance and translational efficiency. Binds spliced mRNA 20-25 nt upstream of exon-exon junctions. The polypeptide is RNA-binding protein with serine-rich domain 1 (RNPS1) (Homo sapiens (Human)).